Here is a 322-residue protein sequence, read N- to C-terminus: Quinolinate synthase (322 aa).

The iminosuccinate site is built by histidine 38 and serine 55. Residue cysteine 100 coordinates [4Fe-4S] cluster. Residues 126–128 (YIN) and serine 143 each bind iminosuccinate. Cysteine 186 contacts [4Fe-4S] cluster. Residues 212–214 (HPE) and threonine 229 each bind iminosuccinate. Cysteine 279 contributes to the [4Fe-4S] cluster binding site.

This sequence belongs to the quinolinate synthase family. Type 2 subfamily. [4Fe-4S] cluster serves as cofactor.

It localises to the cytoplasm. The enzyme catalyses iminosuccinate + dihydroxyacetone phosphate = quinolinate + phosphate + 2 H2O + H(+). It functions in the pathway cofactor biosynthesis; NAD(+) biosynthesis; quinolinate from iminoaspartate: step 1/1. In terms of biological role, catalyzes the condensation of iminoaspartate with dihydroxyacetone phosphate to form quinolinate. In Cyanothece sp. (strain PCC 7425 / ATCC 29141), this protein is Quinolinate synthase.